The primary structure comprises 422 residues: Serine--tRNA ligase (422 aa).

T231–E233 provides a ligand contact to L-serine. R261–E263 contacts ATP. Residue E284 participates in L-serine binding. E348–S351 contributes to the ATP binding site. S383 contributes to the L-serine binding site.

The protein belongs to the class-II aminoacyl-tRNA synthetase family. Type-1 seryl-tRNA synthetase subfamily. Homodimer. The tRNA molecule binds across the dimer.

It localises to the cytoplasm. It catalyses the reaction tRNA(Ser) + L-serine + ATP = L-seryl-tRNA(Ser) + AMP + diphosphate + H(+). It carries out the reaction tRNA(Sec) + L-serine + ATP = L-seryl-tRNA(Sec) + AMP + diphosphate + H(+). It participates in aminoacyl-tRNA biosynthesis; selenocysteinyl-tRNA(Sec) biosynthesis; L-seryl-tRNA(Sec) from L-serine and tRNA(Sec): step 1/1. Its function is as follows. Catalyzes the attachment of serine to tRNA(Ser). Is also able to aminoacylate tRNA(Sec) with serine, to form the misacylated tRNA L-seryl-tRNA(Sec), which will be further converted into selenocysteinyl-tRNA(Sec). In Mycoplasmopsis agalactiae (strain NCTC 10123 / CIP 59.7 / PG2) (Mycoplasma agalactiae), this protein is Serine--tRNA ligase.